A 240-amino-acid polypeptide reads, in one-letter code: Putative F-box/kelch-repeat protein At2g29860 (240 aa).

Residues 1–20 (MVLLSEIPGGSNGDDPNMNP) are disordered. One can recognise an F-box domain in the interval 17-63 (NMNPQELPEELIESIVAPIPRCYYPSLSLLSRAFRHVITSQQLFVTR). Kelch repeat units follow at residues 120–165 (KIYV…VIDG) and 167–212 (IYVI…VTYA).

In Arabidopsis thaliana (Mouse-ear cress), this protein is Putative F-box/kelch-repeat protein At2g29860.